Reading from the N-terminus, the 252-residue chain is Hydroxyacylglutathione hydrolase (252 aa).

Zn(2+) contacts are provided by His54, His56, Asp58, His59, His111, Asp128, and His166.

It belongs to the metallo-beta-lactamase superfamily. Glyoxalase II family. In terms of assembly, monomer. Zn(2+) serves as cofactor.

It catalyses the reaction an S-(2-hydroxyacyl)glutathione + H2O = a 2-hydroxy carboxylate + glutathione + H(+). Its pathway is secondary metabolite metabolism; methylglyoxal degradation; (R)-lactate from methylglyoxal: step 2/2. In terms of biological role, thiolesterase that catalyzes the hydrolysis of S-D-lactoyl-glutathione to form glutathione and D-lactic acid. This chain is Hydroxyacylglutathione hydrolase, found in Aliivibrio salmonicida (strain LFI1238) (Vibrio salmonicida (strain LFI1238)).